We begin with the raw amino-acid sequence, 256 residues long: Thiazole synthase (256 aa).

K95 acts as the Schiff-base intermediate with DXP in catalysis. Residues G156, 182-183 (AG), and 204-205 (NT) contribute to the 1-deoxy-D-xylulose 5-phosphate site.

The protein belongs to the ThiG family. In terms of assembly, homotetramer. Forms heterodimers with either ThiH or ThiS.

It localises to the cytoplasm. The catalysed reaction is [ThiS sulfur-carrier protein]-C-terminal-Gly-aminoethanethioate + 2-iminoacetate + 1-deoxy-D-xylulose 5-phosphate = [ThiS sulfur-carrier protein]-C-terminal Gly-Gly + 2-[(2R,5Z)-2-carboxy-4-methylthiazol-5(2H)-ylidene]ethyl phosphate + 2 H2O + H(+). It participates in cofactor biosynthesis; thiamine diphosphate biosynthesis. In terms of biological role, catalyzes the rearrangement of 1-deoxy-D-xylulose 5-phosphate (DXP) to produce the thiazole phosphate moiety of thiamine. Sulfur is provided by the thiocarboxylate moiety of the carrier protein ThiS. In vitro, sulfur can be provided by H(2)S. The polypeptide is Thiazole synthase (Shigella boydii serotype 18 (strain CDC 3083-94 / BS512)).